We begin with the raw amino-acid sequence, 266 residues long: Glucosamine-6-phosphate deaminase (266 aa).

The active-site Proton acceptor; for enolization step is Asp-72. Asp-141 (for ring-opening step) is an active-site residue. His-143 acts as the Proton acceptor; for ring-opening step in catalysis. The active-site For ring-opening step is Glu-148.

The protein belongs to the glucosamine/galactosamine-6-phosphate isomerase family. NagB subfamily. As to quaternary structure, homohexamer.

It catalyses the reaction alpha-D-glucosamine 6-phosphate + H2O = beta-D-fructose 6-phosphate + NH4(+). It participates in amino-sugar metabolism; N-acetylneuraminate degradation; D-fructose 6-phosphate from N-acetylneuraminate: step 5/5. With respect to regulation, allosterically activated by N-acetylglucosamine 6-phosphate (GlcNAc6P). Catalyzes the reversible isomerization-deamination of glucosamine 6-phosphate (GlcN6P) to form fructose 6-phosphate (Fru6P) and ammonium ion. This is Glucosamine-6-phosphate deaminase from Klebsiella pneumoniae (strain 342).